Here is a 296-residue protein sequence, read N- to C-terminus: Enoyl-CoA hydratase domain-containing protein 2, mitochondrial (296 aa).

K101 carries the N6-acetyllysine; alternate modification. N6-succinyllysine; alternate is present on K101.

This sequence belongs to the enoyl-CoA hydratase/isomerase family.

It is found in the mitochondrion. The chain is Enoyl-CoA hydratase domain-containing protein 2, mitochondrial (ECHDC2) from Bos taurus (Bovine).